A 418-amino-acid chain; its full sequence is MAP kinase-interacting serine/threonine-protein kinase 1 (418 aa).

The segment at 1-23 (MVSSQPVPFDDGGKRRKKKRKTR) is disordered. In terms of domain architecture, Protein kinase spans 37 to 321 (RLTDELLGEG…AFQVLQHPWL (285 aa)). ATP is bound by residues 43 to 51 (LGEGAYAKV) and Lys66. Asp158 serves as the catalytic Proton acceptor. The disordered stretch occupies residues 384–418 (PPSKSRLAKRRAQAHARKGGSHPTHSTVTASQGTP). Over residues 389–403 (RLAKRRAQAHARKGG) the composition is skewed to basic residues. Polar residues predominate over residues 406–418 (PTHSTVTASQGTP).

It belongs to the protein kinase superfamily. CAMK Ser/Thr protein kinase family. It depends on Mg(2+) as a cofactor.

The enzyme catalyses L-seryl-[protein] + ATP = O-phospho-L-seryl-[protein] + ADP + H(+). It carries out the reaction L-threonyl-[protein] + ATP = O-phospho-L-threonyl-[protein] + ADP + H(+). May play a role in the response to environmental stress and cytokines. Appears to regulate translation by phosphorylating EIF4E, thus increasing the affinity of this protein for the 7-methylguanosine-containing mRNA cap. In Xenopus laevis (African clawed frog), this protein is MAP kinase-interacting serine/threonine-protein kinase 1 (mknk1).